The primary structure comprises 284 residues: Bifunctional protein FolD (284 aa).

NADP(+) is bound by residues 165 to 167 (GAS), Ser190, and Ile231.

This sequence belongs to the tetrahydrofolate dehydrogenase/cyclohydrolase family. Homodimer.

It catalyses the reaction (6R)-5,10-methylene-5,6,7,8-tetrahydrofolate + NADP(+) = (6R)-5,10-methenyltetrahydrofolate + NADPH. It carries out the reaction (6R)-5,10-methenyltetrahydrofolate + H2O = (6R)-10-formyltetrahydrofolate + H(+). It participates in one-carbon metabolism; tetrahydrofolate interconversion. Catalyzes the oxidation of 5,10-methylenetetrahydrofolate to 5,10-methenyltetrahydrofolate and then the hydrolysis of 5,10-methenyltetrahydrofolate to 10-formyltetrahydrofolate. In Bordetella avium (strain 197N), this protein is Bifunctional protein FolD.